The sequence spans 132 residues: Large ribosomal subunit protein bL12 (132 aa).

It belongs to the bacterial ribosomal protein bL12 family. In terms of assembly, homodimer. Part of the ribosomal stalk of the 50S ribosomal subunit. Forms a multimeric L10(L12)X complex, where L10 forms an elongated spine to which 2 to 4 L12 dimers bind in a sequential fashion. Binds GTP-bound translation factors.

Its function is as follows. Forms part of the ribosomal stalk which helps the ribosome interact with GTP-bound translation factors. Is thus essential for accurate translation. In Chloroflexus aggregans (strain MD-66 / DSM 9485), this protein is Large ribosomal subunit protein bL12.